A 409-amino-acid polypeptide reads, in one-letter code: Dual-specificity RNA methyltransferase RlmN (409 aa).

Glutamate 121 serves as the catalytic Proton acceptor. Residues 127-376 (EEGRGTLCIS…IRTPRGRDIL (250 aa)) form the Radical SAM core domain. A disulfide bond links cysteine 134 and cysteine 379. [4Fe-4S] cluster contacts are provided by cysteine 141, cysteine 145, and cysteine 148. S-adenosyl-L-methionine-binding positions include 205-206 (GE), serine 237, 259-261 (SLH), and asparagine 336. The S-methylcysteine intermediate role is filled by cysteine 379.

It belongs to the radical SAM superfamily. RlmN family. [4Fe-4S] cluster is required as a cofactor.

It is found in the cytoplasm. It catalyses the reaction adenosine(2503) in 23S rRNA + 2 reduced [2Fe-2S]-[ferredoxin] + 2 S-adenosyl-L-methionine = 2-methyladenosine(2503) in 23S rRNA + 5'-deoxyadenosine + L-methionine + 2 oxidized [2Fe-2S]-[ferredoxin] + S-adenosyl-L-homocysteine. The catalysed reaction is adenosine(37) in tRNA + 2 reduced [2Fe-2S]-[ferredoxin] + 2 S-adenosyl-L-methionine = 2-methyladenosine(37) in tRNA + 5'-deoxyadenosine + L-methionine + 2 oxidized [2Fe-2S]-[ferredoxin] + S-adenosyl-L-homocysteine. Functionally, specifically methylates position 2 of adenine 2503 in 23S rRNA and position 2 of adenine 37 in tRNAs. m2A2503 modification seems to play a crucial role in the proofreading step occurring at the peptidyl transferase center and thus would serve to optimize ribosomal fidelity. The protein is Dual-specificity RNA methyltransferase RlmN of Agrobacterium fabrum (strain C58 / ATCC 33970) (Agrobacterium tumefaciens (strain C58)).